The primary structure comprises 489 residues: mRNA cleavage and polyadenylation factor CLP1 (489 aa).

ATP-binding positions include Glu-28 and 152–157 (YSGKTT).

The protein belongs to the Clp1 family. Clp1 subfamily. In terms of assembly, component of a pre-mRNA cleavage factor complex. Interacts directly with PCF11.

It localises to the nucleus. Its function is as follows. Required for endonucleolytic cleavage during polyadenylation-dependent pre-mRNA 3'-end formation. In Candida albicans (strain SC5314 / ATCC MYA-2876) (Yeast), this protein is mRNA cleavage and polyadenylation factor CLP1.